The primary structure comprises 240 residues: Uridylate kinase (240 aa).

Residue 13–16 (KASG) participates in ATP binding. A UMP-binding site is contributed by glycine 55. 2 residues coordinate ATP: glycine 56 and arginine 60. Residues aspartate 75 and 136 to 143 (TGNPFFTT) contribute to the UMP site. ATP contacts are provided by threonine 163, glutamine 164, tyrosine 169, and aspartate 172.

This sequence belongs to the UMP kinase family. Homohexamer.

The protein resides in the cytoplasm. It carries out the reaction UMP + ATP = UDP + ADP. Its pathway is pyrimidine metabolism; CTP biosynthesis via de novo pathway; UDP from UMP (UMPK route): step 1/1. Inhibited by UTP. Functionally, catalyzes the reversible phosphorylation of UMP to UDP. The polypeptide is Uridylate kinase (Mesorhizobium japonicum (strain LMG 29417 / CECT 9101 / MAFF 303099) (Mesorhizobium loti (strain MAFF 303099))).